A 315-amino-acid polypeptide reads, in one-letter code: MSESSYKTSHTAIRKARRFAMQGLYEWLVTDRRFDIDGKLGWKANAPHDIAARTRATNAMHTVHIGYYHEMMRDIPEQIDALDALISQHLDREINKLDTVEHAILLVGAYELQNRLEIPYKVVLDEAMKLNNHFGATDAHKLINAVLDRMAVELRAPEVDADSKANLRTSQKAAAKPVTKADKKTDINANNSDIEEKPIASNKPRISANNASVKRNSVSKALANITDYKASKQNDTQNTVEEIIIKPTSIETVIVDKVDEIAVSAENIANDQPVEENIAASNDKVTAEVELLDSNSANFDTKSAELNDADEKSQD.

The tract at residues 296–315 (SANFDTKSAELNDADEKSQD) is disordered. The segment covering 302 to 315 (KSAELNDADEKSQD) has biased composition (basic and acidic residues).

This sequence belongs to the NusB family.

Functionally, involved in transcription antitermination. Required for transcription of ribosomal RNA (rRNA) genes. Binds specifically to the boxA antiterminator sequence of the ribosomal RNA (rrn) operons. The chain is Transcription antitermination protein NusB from Psychrobacter cryohalolentis (strain ATCC BAA-1226 / DSM 17306 / VKM B-2378 / K5).